The primary structure comprises 399 residues: Centrosomal protein 43 (399 aa).

One can recognise a LisH domain in the interval Asp-70–Gln-102. Thr-143 is modified (phosphothreonine). Positions Thr-143–Asn-311 are disordered. Ser-152, Ser-156, Ser-160, and Ser-202 each carry phosphoserine. The segment covering Asn-197–Ser-209 has biased composition (low complexity). Over residues Pro-245 to Phe-256 the composition is skewed to acidic residues. The span at Ala-286 to Leu-302 shows a compositional bias: low complexity. Ser-301 and Ser-326 each carry phosphoserine. The disordered stretch occupies residues Gly-328–Glu-357. The residue at position 337 (Tyr-337) is a Phosphotyrosine.

It belongs to the CEP43 family. Homodimer. Part of a ternary complex that contains CEP350, CEP43 and MAPRE1. Interacts directly with CEP350 and MAPRE1. Interacts with CEP19. Interacts (via N-terminus) with CEP350 (via C-terminus).

It is found in the cytoplasm. It localises to the cytoskeleton. The protein localises to the microtubule organizing center. The protein resides in the centrosome. Its subcellular location is the centriole. It is found in the cilium basal body. In terms of biological role, required for anchoring microtubules to the centrosomes. Required for ciliation. The chain is Centrosomal protein 43 (CEP43) from Bos taurus (Bovine).